Consider the following 192-residue polypeptide: uncharacterized protein (192 aa).

The Nudix hydrolase domain occupies Gln29 to His160. Positions Gly67–Ala89 match the Nudix box motif. Mg(2+)-binding residues include Glu83 and Glu87.

The protein belongs to the Nudix hydrolase family. PCD1 subfamily. Requires Mn(2+) as cofactor. It depends on Mg(2+) as a cofactor.

Probably mediates the hydrolysis of some nucleoside diphosphate derivatives. This is an uncharacterized protein from Cronobacter sakazakii (strain ATCC BAA-894) (Enterobacter sakazakii).